The following is a 148-amino-acid chain: Small ribosomal subunit protein eS19 (148 aa).

Basic residues predominate over residues 79-90 (HGSTKNRGSRPA). Disordered regions lie at residues 79–98 (HGST…ASGA) and 116–148 (DEEK…EDDE). Basic and acidic residues predominate over residues 130-140 (RDLDRIAKTTV).

The protein belongs to the eukaryotic ribosomal protein eS19 family.

In Emericella nidulans (strain FGSC A4 / ATCC 38163 / CBS 112.46 / NRRL 194 / M139) (Aspergillus nidulans), this protein is Small ribosomal subunit protein eS19 (rps19).